The following is a 280-amino-acid chain: Transmembrane protein 119 (280 aa).

An N-terminal signal peptide occupies residues 1–20 (MVPWFLLSLLLLARPVPGVA). Residues 21–91 (YSVSLPASFL…IMDFFRQYVM (71 aa)) are Extracellular-facing. Serine 36 carries O-linked (Xyl...) (chondroitin sulfate) serine glycosylation. Residues 38–47 (EAEGSSASSP) show a composition bias toward low complexity. Positions 38-73 (EAEGSSASSPSLPPPGTPAFSPTPERPQPTALDGPV) are disordered. The chain crosses the membrane as a helical span at residues 92 to 112 (LIAVVGSLTFLIMFIVCAALI). The Cytoplasmic segment spans residues 113–280 (TRQKHKATAY…CACNRVSPSV (168 aa)). Disordered stretches follow at residues 133 to 162 (VDQR…EGLD) and 181 to 280 (PARA…SPSV). Residues 148-162 (VPDRAPDSRHEEGLD) are compositionally biased toward basic and acidic residues. Position 269 is a phosphoserine (serine 269).

In terms of assembly, interacts with SMAD1, SMAD5 and RUNX2. In terms of tissue distribution, expressed in spermatocytes and spermatids in the developing testis (at protein level). Expressed in the brain, heart, lung, spleen, skeletal muscle, ovary, testis and epididymis. Predominantly expressed in osteoblasts.

It localises to the cell membrane. The protein localises to the cytoplasm. It is found in the endoplasmic reticulum membrane. The protein resides in the secreted. Plays an important role in bone formation and normal bone mineralization. Promotes the differentiation of myoblasts into osteoblasts. May induce the commitment and differentiation of myoblasts into osteoblasts through an enhancement of BMP2 production and interaction with the BMP-RUNX2 pathway. Up-regulates the expression of ATF4 which plays a central role in osteoblast differentiation. Essential for normal spermatogenesis and late testicular differentiation. The sequence is that of Transmembrane protein 119 (Tmem119) from Mus musculus (Mouse).